A 377-amino-acid polypeptide reads, in one-letter code: Rhodopsin, long-wavelength (377 aa).

The Extracellular segment spans residues 1-51 (MIAVSGPSYEAFSYGGQARFNNQTVVDKVPPDMLHLIDANWYQYPPLNPMW). N-linked (GlcNAc...) asparagine glycosylation occurs at N22. Residues 52–76 (HGILGFVIGMLGFVSAMGNGMVVYI) traverse the membrane as a helical segment. The Cytoplasmic segment spans residues 77–88 (FLSTKSLRTPSN). Residues 89–113 (LFVINLAISNFLMMFCMSPPMVINC) traverse the membrane as a helical segment. The Extracellular portion of the chain corresponds to 114–128 (YYETWVLGPLFCQIY). C125 and C202 are oxidised to a cystine. The helical transmembrane segment at 129–148 (AMLGSLFGCGSIWTMTMIAF) threads the bilayer. Over 149-167 (DRYNVIVKGLSGKPLSING) the chain is Cytoplasmic. A helical transmembrane segment spans residues 168 to 191 (ALIRIIAIWLFSLGWTIAPMFGWN). Topologically, residues 192 to 215 (RYVPEGNMTACGTDYFNRGLLSAS) are extracellular. N-linked (GlcNAc...) asparagine glycosylation occurs at N198. Residues 216 to 243 (YLVCYGIWVYFVPLFLIIYSYWFIIQAV) traverse the membrane as a helical segment. At 244–278 (AAHEKNMREQAKKMNVASLRSSENQNTSAECKLAK) the chain is on the cytoplasmic side. Residues 279–302 (VALMTISLWFMAWTPYLVINFSGI) traverse the membrane as a helical segment. The Extracellular segment spans residues 303–309 (FNLVKIS). The helical transmembrane segment at 310 to 334 (PLFTIWGSLFAKANAVYNPIVYGIS) threads the bilayer. K321 is subject to N6-(retinylidene)lysine. The Cytoplasmic portion of the chain corresponds to 335-377 (HPKYRAALFAKFPSLACAAEPSSDAVSTTSGTTTVTDNEKSNA). Positions 357–370 (SDAVSTTSGTTTVT) are enriched in low complexity. Residues 357–377 (SDAVSTTSGTTTVTDNEKSNA) form a disordered region.

It belongs to the G-protein coupled receptor 1 family. Opsin subfamily. In terms of processing, phosphorylated on some or all of the serine and threonine residues present in the C-terminal region.

It is found in the membrane. In terms of biological role, visual pigments are the light-absorbing molecules that mediate vision. They consist of an apoprotein, opsin, covalently linked to 11-cis-retinal. The protein is Rhodopsin, long-wavelength of Apis mellifera (Honeybee).